A 544-amino-acid polypeptide reads, in one-letter code: Bacillolysin (544 aa).

A signal peptide spans 1–25 (MNKRAMLGAIGLAFGLMAWPFGASA). A propeptide spans 26–225 (KGKSMVWNEQ…DEAKPGGAQP (200 aa)) (activation peptide). Residues Asp-285, Asp-287, Gln-289, and Asp-366 each contribute to the Ca(2+) site. His-370 serves as a coordination point for Zn(2+). Residue Glu-371 is part of the active site. Zn(2+) contacts are provided by His-374 and Glu-394. Positions 405, 411, 413, 415, 418, 421, 422, 425, and 428 each coordinate Ca(2+). The active-site Proton donor is the His-459.

Belongs to the peptidase M4 family. Ca(2+) is required as a cofactor. Zn(2+) serves as cofactor.

It localises to the secreted. The enzyme catalyses Similar, but not identical, to that of thermolysin.. Extracellular zinc metalloprotease. In Bacillus caldolyticus, this protein is Bacillolysin (npr).